Reading from the N-terminus, the 1376-residue chain is YLP motif-containing protein 1 (1376 aa).

Disordered regions lie at residues 1–335 and 511–1058; these read MYPN…PEED and STIP…PPGR. The span at 14 to 27 shows a compositional bias: pro residues; sequence YPPPPVPPPPPPVA. 2 stretches are compositionally biased toward low complexity: residues 31–50 and 59–80; these read ASPG…SSSG and LAQL…LQPH. Composition is skewed to pro residues over residues 81–93, 102–114, 148–158, 166–176, and 184–204; these read HLPP…PPVM, QPPP…PPGP, PESPPVPPGSY, MPPPQPPPSYY, and YLPP…PPSI. Polar residues-rich tracts occupy residues 207–216 and 238–260; these read GNKTTIQQEP and STMT…LQQR. Basic residues predominate over residues 261–271; that stretch reads TKVHLPGHKKG. Positions 277–286 are enriched in basic and acidic residues; the sequence is DVPEPIKEEA. 4 stretches are compositionally biased toward pro residues: residues 303–320, 511–537, 545–594, and 632–641; these read PPLP…PPEE, STIP…PGMP, LPPP…PQGM, and PPSPYHPPPQ. Residues 642 to 671 are compositionally biased toward polar residues; sequence SEQGNSKPLNKVFSSEQGLGESSSALSQSV. Residue lysine 675 is modified to N6-methyllysine. Positions 698–714 are enriched in basic and acidic residues; the sequence is RGPREQKEQLQKLKDFG. Composition is skewed to pro residues over residues 738–753, 773–796, and 840–870; these read MYPP…PMGK, TRPP…PPVI, and PVLP…PPPV. Lysine 886 participates in a covalent cross-link: Glycyl lysine isopeptide (Lys-Gly) (interchain with G-Cter in SUMO2). Basic and acidic residues-rich tracts occupy residues 896–930, 937–1004, 1013–1023, and 1039–1058; these read ITLR…EPYF, TDHR…DRPP, GERRTYPEERM, and RVEK…PPGR. A Glycyl lysine isopeptide (Lys-Gly) (interchain with G-Cter in SUMO2) cross-link involves residue lysine 943. The tract at residues 1326 to 1333 is involved in interaction with PPP1CA; sequence KKRVRWAD.

In terms of assembly, interacts with PPP1CA and NCOA5. Forms a complex with ILF2, ILF3, KHDRBS1, RBMX, NCOA5 and PPP1CA. As to expression, high level expression seen in the brain, adipose tissue, heart and kidney, with a low level expression in muscle, spleen and lung (at protein level).

The protein localises to the nucleus. Its subcellular location is the nucleus speckle. Its function is as follows. Plays a role in the reduction of telomerase activity during differentiation of embryonic stem cells by binding to the core promoter of TERT and controlling its down-regulation. This chain is YLP motif-containing protein 1 (Ylpm1), found in Rattus norvegicus (Rat).